A 250-amino-acid polypeptide reads, in one-letter code: Coproheme decarboxylase (250 aa).

Fe-coproporphyrin III contacts are provided by residues arginine 131, 145–149, histidine 172, and glutamine 185; that span reads YPMNK. The active site involves tyrosine 145.

This sequence belongs to the ChdC family. Type 1 subfamily. Fe-coproporphyrin III is required as a cofactor.

The enzyme catalyses Fe-coproporphyrin III + 2 H2O2 + 2 H(+) = heme b + 2 CO2 + 4 H2O. It carries out the reaction Fe-coproporphyrin III + H2O2 + H(+) = harderoheme III + CO2 + 2 H2O. It catalyses the reaction harderoheme III + H2O2 + H(+) = heme b + CO2 + 2 H2O. Its pathway is porphyrin-containing compound metabolism; protoheme biosynthesis. In terms of biological role, involved in coproporphyrin-dependent heme b biosynthesis. Catalyzes the decarboxylation of Fe-coproporphyrin III (coproheme) to heme b (protoheme IX), the last step of the pathway. The reaction occurs in a stepwise manner with a three-propionate intermediate. This chain is Coproheme decarboxylase, found in Staphylococcus aureus (strain MSSA476).